A 101-amino-acid polypeptide reads, in one-letter code: AFA-III adhesin operon regulatory protein (101 aa).

Its function is as follows. Regulates the transcription of genes involved in the biosynthesis of afimbrial adhesin-III. The sequence is that of AFA-III adhesin operon regulatory protein (afaA) from Escherichia coli.